Consider the following 173-residue polypeptide: Protein tyrosine phosphatase type IVA 3 (173 aa).

A Tyrosine-protein phosphatase domain is found at 8–161 (APVEVSYKHM…YRPKQRLRFK (154 aa)). Cysteines 49 and 104 form a disulfide. The Proton donor role is filled by Asp-72. The active-site Phosphocysteine intermediate is Cys-104. Position 110 (Arg-110) interacts with substrate. The residue at position 170 (Cys-170) is a Cysteine methyl ester. The S-farnesyl cysteine moiety is linked to residue Cys-170. Positions 171 to 173 (CVM) are cleaved as a propeptide — removed in mature form.

Belongs to the protein-tyrosine phosphatase family. As to quaternary structure, interacts with tubulin. Farnesylated. Farnesylation is required for membrane targeting. As to expression, mainly expressed in cardiomyocytes and skeletal muscle; also found in pancreas. Consistently overexpressed in colon cancer metastasis.

It localises to the cell membrane. The protein localises to the early endosome. It carries out the reaction O-phospho-L-tyrosyl-[protein] + H2O = L-tyrosyl-[protein] + phosphate. With respect to regulation, inhibited by sodium orthovanadate and peroxovanadium compounds, and by pentamidine. Its function is as follows. Protein tyrosine phosphatase which stimulates progression from G1 into S phase during mitosis. Enhances cell proliferation, cell motility and invasive activity, and promotes cancer metastasis. May be involved in the progression of cardiac hypertrophy by inhibiting intracellular calcium mobilization in response to angiotensin II. This Homo sapiens (Human) protein is Protein tyrosine phosphatase type IVA 3 (PTP4A3).